Consider the following 188-residue polypeptide: MMGQAHAEDSGPAIKVHVTQGESHVSADPQVVMTTVLGSCIAACLRDPTTGIGGMNHFLLPDSGDRKDGGDAVRYGAYAMELLINGLLKKGARRDRLEAKIFGGGKLFDGLSDVGASNAAFAERFLRDEGIPIVSSSTGGLSARRVEFWPASGRVRQRLVAVDNAPAEVRRPTPAVAPTANSGDLELF.

Belongs to the CheD family.

The catalysed reaction is L-glutaminyl-[protein] + H2O = L-glutamyl-[protein] + NH4(+). Probably deamidates glutamine residues to glutamate on methyl-accepting chemotaxis receptors (MCPs), playing an important role in chemotaxis. This chain is Probable chemoreceptor glutamine deamidase CheD, found in Caulobacter sp. (strain K31).